A 499-amino-acid polypeptide reads, in one-letter code: ALBINO3-like protein 1, chloroplastic (499 aa).

The N-terminal 45 residues, 1–45 (MSSTISLKPTHLILSSFSTGKVLQFRRSRFSHTPSSSSSRYRTLV), are a transit peptide targeting the chloroplast. 4 consecutive transmembrane segments (helical) span residues 115–135 (LSTVHVPYSYGFAIILLTVLV), 184–204 (LAGINPLAGCLPTLATIPVWI), 263–283 (LAYLVLPLLLVFSQYLSIQIM), and 302–322 (LLPLMIGYFALSVPSGLSLYW). The segment at 378–499 (LKIPREKGGE…QQHSHETEKR (122 aa)) is disordered. Basic and acidic residues-rich tracts occupy residues 379–420 (KIPR…RQKA), 430–452 (DKAHEQDEKSDTAIVAEDDKKTE), and 486–499 (HDTEQQHSHETEKR). A coiled-coil region spans residues 397 to 436 (GERFRLLKEQEAKRRREKEERQKAEAALSNQNTDKAHEQD).

Belongs to the OXA1/ALB3/YidC (TC 2.A.9.2) family. In terms of assembly, homodimer. Interacts with ALB3. Interacts with STIC2. Highly expressed in green tissues.

The protein localises to the plastid. It is found in the chloroplast thylakoid membrane. Its function is as follows. Required for the insertion of some light harvesting chlorophyll-binding proteins (LHCP) into the chloroplast thylakoid membrane. Plays a role in the accumulation of some cytochrome b6f components in the thylakoid membrane. Required for the assembly and/or stability of the F(1)F(0) ATP synthase in chloroplast thylakoid membranes. Functions to stabilize or promote assembly of F(1) during its attachment to the membrane-embedded F(0) part. Participates with STIC2 in thylakoid protein targeting. May function with a specific subset of thylakoidal proteins. The sequence is that of ALBINO3-like protein 1, chloroplastic from Arabidopsis thaliana (Mouse-ear cress).